The following is a 246-amino-acid chain: Probable septum site-determining protein MinC (246 aa).

It belongs to the MinC family. As to quaternary structure, interacts with MinD and FtsZ.

In terms of biological role, cell division inhibitor that blocks the formation of polar Z ring septums. Rapidly oscillates between the poles of the cell to destabilize FtsZ filaments that have formed before they mature into polar Z rings. Prevents FtsZ polymerization. The protein is Probable septum site-determining protein MinC of Lachnospira eligens (strain ATCC 27750 / DSM 3376 / VPI C15-48 / C15-B4) (Eubacterium eligens).